The following is a 640-amino-acid chain: UvrABC system protein C (640 aa).

In terms of domain architecture, GIY-YIG spans 22–101 (NDPGCYLMKD…IKSHQPYFNV (80 aa)). The region spanning 211 to 246 (DELRILLEKQMISFSESLKFEEAGSVRDQLKGIDRL) is the UVR domain.

Belongs to the UvrC family. Interacts with UvrB in an incision complex.

Its subcellular location is the cytoplasm. Its function is as follows. The UvrABC repair system catalyzes the recognition and processing of DNA lesions. UvrC both incises the 5' and 3' sides of the lesion. The N-terminal half is responsible for the 3' incision and the C-terminal half is responsible for the 5' incision. The protein is UvrABC system protein C of Prochlorococcus marinus (strain NATL1A).